The following is a 470-amino-acid chain: AAA-ATPase At5g40000 (470 aa).

Residues 1–30 (MMMMGDSFGSIGSSMASLFFLWATIQQIFP) form the signal peptide. 248–255 (GPPGTGKS) provides a ligand contact to ATP.

It belongs to the AAA ATPase family. BCS1 subfamily. Mg(2+) serves as cofactor.

The enzyme catalyses ATP + H2O = ADP + phosphate + H(+). The sequence is that of AAA-ATPase At5g40000 from Arabidopsis thaliana (Mouse-ear cress).